Reading from the N-terminus, the 237-residue chain is Myelin protein zero-like protein 3 (237 aa).

Positions 1–32 (MQLARGTVGGRGCALFPLLSILVVQGARIVLS) are cleaved as a signal peptide. In terms of domain architecture, Ig-like V-type spans 33 to 149 (LEISADAHVR…NIPLTELTVT (117 aa)). The Extracellular portion of the chain corresponds to 33–159 (LEISADAHVR…ERGFGTMLSS (127 aa)). Cys-53 and Cys-129 form a disulfide bridge. N-linked (GlcNAc...) asparagine glycosylation is present at Asn-124. Residues 160 to 180 (VALLSILVFVPSAVVVILLLV) traverse the membrane as a helical segment. Residues 181–237 (RMGRKATGVQKRSRSGYKKSSIEVSDDTDQEDSNDCMTRLCVRCAECLDSDYEEEAY) are Cytoplasmic-facing.

The protein belongs to the myelin P0 protein family. As to expression, present in all tissues tested, including the skin. Present in the keratinocytes and sebocytes in the skin (at protein level).

Its subcellular location is the membrane. Its function is as follows. Mediates homophilic cell-cell adhesion. This chain is Myelin protein zero-like protein 3 (Mpzl3), found in Mus musculus (Mouse).